The primary structure comprises 324 residues: Polyketide biosynthesis acyltransferase homolog PksD (324 aa).

The active site involves serine 99.

Its subcellular location is the cytoplasm. Its pathway is antibiotic biosynthesis; bacillaene biosynthesis. In terms of biological role, probably involved in some intermediate steps for the synthesis of the antibiotic polyketide bacillaene which is involved in secondary metabolism. This chain is Polyketide biosynthesis acyltransferase homolog PksD (pksD), found in Bacillus subtilis (strain 168).